The following is a 75-amino-acid chain: YTLLCYKTPSPINAETCPPGENLCYTKMWCDAWCSSRGKVVELGCAATCPSKKPYEEVTCCSTDKCNPHPKQRPD.

Positions 1-2 (YT) are cleaved as a signal peptide. 5 disulfides stabilise this stretch: Cys5–Cys24, Cys17–Cys45, Cys30–Cys34, Cys49–Cys60, and Cys61–Cys66.

It belongs to the three-finger toxin family. Long-chain subfamily. Type II alpha-neurotoxin sub-subfamily. In terms of assembly, monomer in solution, homodimer in crystal state. In terms of tissue distribution, expressed by the venom gland.

The protein resides in the secreted. Binds to muscular and neuronal nicotinic acetylcholine receptor (nAChR) and inhibits acetylcholine from binding to the receptor, thereby impairing neuromuscular and neuronal transmission. Blocks muscle type nAChR. Also binds with high affinity to alpha-7/CHRNA7 nAChRs. In addition, shows a weak inhibition of neuronal alpha-3-beta-2/CHRNA3-CHRNB2 nAChR. Selectively binds to alpha-1-delta subunit interface of the mouse muscle nicotinic acetylcholine receptor, with a 10-fold higher affinity for the adult than for the fetal receptors. In vivo, when intraperitoneally injected into mice, causes flaccid paralysis and respiratory distress, followed by death within 2-4 hours. The protein is Alpha-elapitoxin-Bc2c of Bungarus candidus (Malayan krait).